The following is a 277-amino-acid chain: UPF0276 protein PP_0992 (277 aa).

This sequence belongs to the UPF0276 family.

The polypeptide is UPF0276 protein PP_0992 (Pseudomonas putida (strain ATCC 47054 / DSM 6125 / CFBP 8728 / NCIMB 11950 / KT2440)).